The chain runs to 75 residues: MKKSAAVVAGAIMALGMAAPAFADAGAEGAAVGSPGVLSGNVIQVPVHVPVNVCGNSINVVGLLNPAFGNKCEND.

Residues 1-23 (MKKSAAVVAGAIMALGMAAPAFA) form the signal peptide. The Chaplin domain occupies 34–74 (SPGVLSGNVIQVPVHVPVNVCGNSINVVGLLNPAFGNKCEN). Cys-54 and Cys-72 are joined by a disulfide.

It belongs to the chaplin family. Short chaplin subfamily.

The protein resides in the cell surface. The protein localises to the secreted. It localises to the cell wall. Its subcellular location is the fimbrium. Its function is as follows. One of 8 partially redundant surface-active proteins required for efficient formation of aerial mycelium; the short chaplins assemble into a hydrophobic, amyloidal fibrillar surface layer that envelopes and protects aerial hyphae and spores, presumably anchored to the long chaplins. Chaplins have an overlapping function with the surface-active SapB peptide; chaplins are essential on minimal medium while on rich medium both chaplins and SapB are required for efficient aerial hyphae formation. Chaplins are also involved in cell attachment to a hydrophobic surface. Forms amyloid fibrils in vitro probably composed of stacked beta-sheets, at low extracellular concentrations individually restores the ability to form aerial hyphae to a chaplin-deficient strain. A small chaplin extract (ChpD, ChpE, ChpF, ChpG and ChpH) self-assembles into 2 different amyloids; small fibrils at the air-water interface form an amphipathic membrane that resembles spore-surface structures involved in aerial hyphae formation, and hydrophilic fibrils in solution that resemble the fibers that attach cells to a hydrophobic surface. At the air-water interface the hydrophilic surface is in contact with water (probably equivalent to the peptidoglycan layer), while the hydrophobic face is exposed to the air, making the surface of the aerial hyphae hydrophobic. A minimal chaplin strain capable of forming aerial mycelium/hyphae on minimal medium contains ChpC, ChpE and ChpH. The strain also has restored rodlet formation on the hyphae surface. A second minimal chaplin strain with ChpA, ChpD and ChpE makes slightly less robust hyphae. A small chaplin extract applied to a chaplin-deficient strain restores aerial hyphae formation. The small chaplin extract forms an amyloid-like structure similar to that seen on the surface of cells without rodlets (rdlA-rdlB deletions), and is highly surface active, reducing surface tension from 72 to 26 mJ/m(2), which probably allows escape of hyphae from an aqueous environment into air. The sequence is that of Chaplin-D from Streptomyces coelicolor (strain ATCC BAA-471 / A3(2) / M145).